Here is a 208-residue protein sequence, read N- to C-terminus: Imidazoleglycerol-phosphate dehydratase (208 aa).

Belongs to the imidazoleglycerol-phosphate dehydratase family.

The protein resides in the cytoplasm. The enzyme catalyses D-erythro-1-(imidazol-4-yl)glycerol 3-phosphate = 3-(imidazol-4-yl)-2-oxopropyl phosphate + H2O. It functions in the pathway amino-acid biosynthesis; L-histidine biosynthesis; L-histidine from 5-phospho-alpha-D-ribose 1-diphosphate: step 6/9. This chain is Imidazoleglycerol-phosphate dehydratase, found in Anaeromyxobacter dehalogenans (strain 2CP-1 / ATCC BAA-258).